A 278-amino-acid polypeptide reads, in one-letter code: Ribosomal RNA small subunit methyltransferase A (278 aa).

The S-adenosyl-L-methionine site is built by asparagine 28, leucine 30, glycine 55, glutamate 77, aspartate 103, and asparagine 122.

It belongs to the class I-like SAM-binding methyltransferase superfamily. rRNA adenine N(6)-methyltransferase family. RsmA subfamily.

It localises to the cytoplasm. The catalysed reaction is adenosine(1518)/adenosine(1519) in 16S rRNA + 4 S-adenosyl-L-methionine = N(6)-dimethyladenosine(1518)/N(6)-dimethyladenosine(1519) in 16S rRNA + 4 S-adenosyl-L-homocysteine + 4 H(+). Its function is as follows. Specifically dimethylates two adjacent adenosines (A1518 and A1519) in the loop of a conserved hairpin near the 3'-end of 16S rRNA in the 30S particle. May play a critical role in biogenesis of 30S subunits. The polypeptide is Ribosomal RNA small subunit methyltransferase A (Cereibacter sphaeroides (strain ATCC 17029 / ATH 2.4.9) (Rhodobacter sphaeroides)).